Consider the following 763-residue polypeptide: Ethylene receptor 2 (763 aa).

The next 3 helical transmembrane spans lie at 58–78, 86–106, and 115–135; these read FLIA…ATCS, IVLQ…ITMF, and VVLA…ATAI. Cu cation-binding residues include cysteine 97 and histidine 101. The GAF domain occupies 190 to 339; that stretch reads DRHTILYTTM…VVADQVAVAL (150 aa). In terms of domain architecture, Histidine kinase spans 382–615; it reads AMYDGMRRPM…TIMLALQFQL (234 aa). Positions 641–760 constitute a Response regulatory domain; sequence QVILVDSDDT…ALGDELYRVL (120 aa). Aspartate 692 is modified (4-aspartylphosphate).

This sequence belongs to the ethylene receptor family. Requires Cu cation as cofactor. Autophosphorylated on serine, threonine and tyrosine residues.

It localises to the endoplasmic reticulum membrane. The catalysed reaction is ATP + protein L-histidine = ADP + protein N-phospho-L-histidine.. Functionally, ethylene receptor related to bacterial two-component regulators. Acts as a negative regulator of ethylene signaling. May delay the transition from the vegetative stage to the floral stage by up-regulating GI (GIGANTEA) and RCN1 and cause starch accumulation in stems by down-regulating the alpha-amylase AMY3D. The chain is Ethylene receptor 2 from Oryza sativa subsp. japonica (Rice).